The sequence spans 145 residues: uncharacterized protein (145 aa).

This sequence belongs to the methyltransferase superfamily.

In terms of biological role, probable methyltransferase. This is an uncharacterized protein from Schizosaccharomyces pombe (strain 972 / ATCC 24843) (Fission yeast).